The chain runs to 327 residues: GTP 3',8-cyclase (327 aa).

Residues 21 to 233 enclose the Radical SAM core domain; that stretch reads SYGRRIRKLR…AKIQQKYSLK (213 aa). GTP is bound at residue Arg30. [4Fe-4S] cluster is bound by residues Cys37 and Cys41. Position 43 (Tyr43) interacts with S-adenosyl-L-methionine. Cys44 contributes to the [4Fe-4S] cluster binding site. Arg79 is a binding site for GTP. Gly83 serves as a coordination point for S-adenosyl-L-methionine. Thr109 is a GTP binding site. Ser133 contacts S-adenosyl-L-methionine. Residue Lys169 coordinates GTP. Met203 is an S-adenosyl-L-methionine binding site. 2 residues coordinate [4Fe-4S] cluster: Cys265 and Cys268. 270–272 is a binding site for GTP; it reads RWR. Residue Cys282 participates in [4Fe-4S] cluster binding.

This sequence belongs to the radical SAM superfamily. MoaA family. In terms of assembly, monomer and homodimer. [4Fe-4S] cluster serves as cofactor.

The enzyme catalyses GTP + AH2 + S-adenosyl-L-methionine = (8S)-3',8-cyclo-7,8-dihydroguanosine 5'-triphosphate + 5'-deoxyadenosine + L-methionine + A + H(+). Its pathway is cofactor biosynthesis; molybdopterin biosynthesis. Catalyzes the cyclization of GTP to (8S)-3',8-cyclo-7,8-dihydroguanosine 5'-triphosphate. The protein is GTP 3',8-cyclase of Synechocystis sp. (strain ATCC 27184 / PCC 6803 / Kazusa).